A 568-amino-acid chain; its full sequence is MSVSVFNRCWSKVILETLVRQGVSHLCIAPGSRSTPLTLEAVRLQNAGAVTCHTHFDERGLGFFALGIAKATQSPVAIIVTSGTATANLYPAIIEARQTGVNLFVLTADRPPELWECGANQAILQQNMFGQYPVANVNLPKPNADYSAQWLISLLEQAVFQQKQQGGVVHINVPFAEPLYDATDEEVNSHSWLQPLQRWLIQNKSWINVEAQQNEVLMHENWDHWRTKRGVVVVGQLPAEQAMGINSWASAMGWVLLTDIQSGVVPTTPYEDIWLANQTVREKLLQADIVIQFGARFISKRINQFLQAFKGEFWLVEQSGKALDPYHHSLTRFNAKVHHWLRAHPPLRQKPWLLEPLALSKFCATFIEQQVGGNLTEASLALRLPTLLPYNGVLFLGNSLLVRLVDALTQLPESYPVYTNRGASGIDGLLATAAGIGIGSNKPVVAVIGDTSTLYDLNSFALFKNVTQPTLIFVINNNGGAIFDMLPVDEQVKDQFYRLPHNGDFSQIAAMFDLKYAHPYTWADLNSVVKQAYSRRKATLIEIKTNPSDGSSLYKRLIEQISHAVIGA.

The protein belongs to the TPP enzyme family. MenD subfamily. As to quaternary structure, homodimer. Requires Mg(2+) as cofactor. Mn(2+) serves as cofactor. The cofactor is thiamine diphosphate.

The catalysed reaction is isochorismate + 2-oxoglutarate + H(+) = 5-enolpyruvoyl-6-hydroxy-2-succinyl-cyclohex-3-ene-1-carboxylate + CO2. It participates in quinol/quinone metabolism; 1,4-dihydroxy-2-naphthoate biosynthesis; 1,4-dihydroxy-2-naphthoate from chorismate: step 2/7. The protein operates within quinol/quinone metabolism; menaquinone biosynthesis. Catalyzes the thiamine diphosphate-dependent decarboxylation of 2-oxoglutarate and the subsequent addition of the resulting succinic semialdehyde-thiamine pyrophosphate anion to isochorismate to yield 2-succinyl-5-enolpyruvyl-6-hydroxy-3-cyclohexene-1-carboxylate (SEPHCHC). This Haemophilus influenzae (strain ATCC 51907 / DSM 11121 / KW20 / Rd) protein is 2-succinyl-5-enolpyruvyl-6-hydroxy-3-cyclohexene-1-carboxylate synthase.